Consider the following 555-residue polypeptide: Glucose-6-phosphate isomerase (555 aa).

The active-site Proton donor is Glu353. Residues His384 and Lys516 contribute to the active site.

Belongs to the GPI family.

Its subcellular location is the cytoplasm. It catalyses the reaction alpha-D-glucose 6-phosphate = beta-D-fructose 6-phosphate. Its pathway is carbohydrate biosynthesis; gluconeogenesis. The protein operates within carbohydrate degradation; glycolysis; D-glyceraldehyde 3-phosphate and glycerone phosphate from D-glucose: step 2/4. In terms of biological role, catalyzes the reversible isomerization of glucose-6-phosphate to fructose-6-phosphate. This is Glucose-6-phosphate isomerase from Methylobacillus flagellatus (strain ATCC 51484 / DSM 6875 / VKM B-1610 / KT).